The primary structure comprises 427 residues: Putative F-box protein At4g10740 (427 aa).

Positions 2–47 (RTTMSNLPKELVEDIVSRVPLHCLRAMRLTCKNWNALLESQSFKKM) constitute an F-box domain.

The protein is Putative F-box protein At4g10740 of Arabidopsis thaliana (Mouse-ear cress).